Reading from the N-terminus, the 264-residue chain is 14-3-3 protein homolog (264 aa).

Positions 236-258 (SEAPAATEEQQQSSQAPAAQPTE) are enriched in low complexity. The segment at 236–264 (SEAPAATEEQQQSSQAPAAQPTEGKADQE) is disordered.

It belongs to the 14-3-3 family.

This is 14-3-3 protein homolog (BMH1) from Candida albicans (strain SC5314 / ATCC MYA-2876) (Yeast).